The primary structure comprises 279 residues: Putative pyruvate, phosphate dikinase regulatory protein (279 aa).

153–160 (GVSRTSKT) serves as a coordination point for ADP.

The protein belongs to the pyruvate, phosphate/water dikinase regulatory protein family. PDRP subfamily.

The enzyme catalyses N(tele)-phospho-L-histidyl/L-threonyl-[pyruvate, phosphate dikinase] + ADP = N(tele)-phospho-L-histidyl/O-phospho-L-threonyl-[pyruvate, phosphate dikinase] + AMP + H(+). The catalysed reaction is N(tele)-phospho-L-histidyl/O-phospho-L-threonyl-[pyruvate, phosphate dikinase] + phosphate + H(+) = N(tele)-phospho-L-histidyl/L-threonyl-[pyruvate, phosphate dikinase] + diphosphate. Its function is as follows. Bifunctional serine/threonine kinase and phosphorylase involved in the regulation of the pyruvate, phosphate dikinase (PPDK) by catalyzing its phosphorylation/dephosphorylation. The polypeptide is Putative pyruvate, phosphate dikinase regulatory protein (Rhodopseudomonas palustris (strain BisA53)).